The primary structure comprises 146 residues: UPF0756 membrane protein PTH_1817 (146 aa).

4 helical membrane-spanning segments follow: residues leucine 6–isoleucine 26, methionine 46–tryptophan 66, isoleucine 69–threonine 89, and isoleucine 105–valine 125.

This sequence belongs to the UPF0756 family.

It is found in the cell membrane. The protein is UPF0756 membrane protein PTH_1817 of Pelotomaculum thermopropionicum (strain DSM 13744 / JCM 10971 / SI).